The sequence spans 175 residues: Ribosome maturation factor RimM (175 aa).

The PRC barrel domain occupies 98–172 (DGEFHVRDLQ…WLLITPPKGL (75 aa)).

It belongs to the RimM family. Binds ribosomal protein uS19.

It localises to the cytoplasm. In terms of biological role, an accessory protein needed during the final step in the assembly of 30S ribosomal subunit, possibly for assembly of the head region. Essential for efficient processing of 16S rRNA. May be needed both before and after RbfA during the maturation of 16S rRNA. It has affinity for free ribosomal 30S subunits but not for 70S ribosomes. In Synechococcus sp. (strain RCC307), this protein is Ribosome maturation factor RimM.